The sequence spans 396 residues: Tryptophan synthase beta chain (396 aa).

Lys86 carries the post-translational modification N6-(pyridoxal phosphate)lysine.

Belongs to the TrpB family. In terms of assembly, tetramer of two alpha and two beta chains. Requires pyridoxal 5'-phosphate as cofactor.

It carries out the reaction (1S,2R)-1-C-(indol-3-yl)glycerol 3-phosphate + L-serine = D-glyceraldehyde 3-phosphate + L-tryptophan + H2O. Its pathway is amino-acid biosynthesis; L-tryptophan biosynthesis; L-tryptophan from chorismate: step 5/5. Functionally, the beta subunit is responsible for the synthesis of L-tryptophan from indole and L-serine. The sequence is that of Tryptophan synthase beta chain from Francisella tularensis subsp. novicida (strain U112).